The chain runs to 217 residues: UPF0323 lipoprotein HPP12_0232 (217 aa).

Positions 1 to 27 (MKKPYRKISDYAIVGGLSALVMVSIVG) are cleaved as a signal peptide. Cys-28 is lipidated: N-palmitoyl cysteine. Cys-28 carries the S-diacylglycerol cysteine lipid modification. A compositionally biased stretch (polar residues) spans 160-171 (QRTYKSPQAYQR). The interval 160-217 (QRTYKSPQAYQRSQNSFSKSAPSASSMGTASKGQSGFFGSSRPTSSPAISSGTRGFNS) is disordered. Residues 172 to 185 (SQNSFSKSAPSASS) are compositionally biased toward low complexity. Over residues 186-197 (MGTASKGQSGFF) the composition is skewed to polar residues. Over residues 199–210 (SSRPTSSPAISS) the composition is skewed to low complexity.

The protein belongs to the UPF0323 family.

It localises to the cell membrane. This Helicobacter pylori (strain P12) protein is UPF0323 lipoprotein HPP12_0232.